The sequence spans 346 residues: Biotin synthase (346 aa).

Positions 38–256 constitute a Radical SAM core domain; it reads QQVQVSTLLS…IAVARIMMPT (219 aa). 3 residues coordinate [4Fe-4S] cluster: Cys53, Cys57, and Cys60. Positions 97, 128, 188, and 260 each coordinate [2Fe-2S] cluster.

This sequence belongs to the radical SAM superfamily. Biotin synthase family. In terms of assembly, homodimer. Requires [4Fe-4S] cluster as cofactor. It depends on [2Fe-2S] cluster as a cofactor.

It carries out the reaction (4R,5S)-dethiobiotin + (sulfur carrier)-SH + 2 reduced [2Fe-2S]-[ferredoxin] + 2 S-adenosyl-L-methionine = (sulfur carrier)-H + biotin + 2 5'-deoxyadenosine + 2 L-methionine + 2 oxidized [2Fe-2S]-[ferredoxin]. The protein operates within cofactor biosynthesis; biotin biosynthesis; biotin from 7,8-diaminononanoate: step 2/2. Functionally, catalyzes the conversion of dethiobiotin (DTB) to biotin by the insertion of a sulfur atom into dethiobiotin via a radical-based mechanism. The protein is Biotin synthase of Salmonella dublin (strain CT_02021853).